The sequence spans 843 residues: DNA-directed RNA polymerase subunit beta' (843 aa).

Zn(2+) contacts are provided by Cys-70, Cys-72, Cys-85, and Cys-88. Asp-686, Asp-688, and Asp-690 together coordinate Mg(2+).

The protein belongs to the RNA polymerase beta' chain family. RpoC1 subfamily. As to quaternary structure, in plastids the minimal PEP RNA polymerase catalytic core is composed of four subunits: alpha, beta, beta', and beta''. When a (nuclear-encoded) sigma factor is associated with the core the holoenzyme is formed, which can initiate transcription. It depends on Mg(2+) as a cofactor. Zn(2+) serves as cofactor.

It localises to the plastid. The protein resides in the chloroplast. The catalysed reaction is RNA(n) + a ribonucleoside 5'-triphosphate = RNA(n+1) + diphosphate. Its function is as follows. DNA-dependent RNA polymerase catalyzes the transcription of DNA into RNA using the four ribonucleoside triphosphates as substrates. The protein is DNA-directed RNA polymerase subunit beta' of Trieres chinensis (Marine centric diatom).